The chain runs to 403 residues: Alpha-1-antiproteinase F (403 aa).

The first 22 residues, 1–22 (SAIPRGLLLLAGLCCLVFGIMA), serve as a signal peptide directing secretion. Residues N55, N92, N155, N222, and N256 are each glycosylated (N-linked (GlcNAc...) asparagine). Residues 358-377 (GATELEITPHSVPQDLFFNK) form an RCL region.

Belongs to the serpin family.

The protein resides in the secreted. Functionally, inhibits elastase, chymotrypsin, cathepsin G, plasmin, and trypsin. The protein is Alpha-1-antiproteinase F of Cavia porcellus (Guinea pig).